Reading from the N-terminus, the 252-residue chain is Imidazole glycerol phosphate synthase subunit HisF (252 aa).

Catalysis depends on residues Asp-11 and Asp-130.

Belongs to the HisA/HisF family. In terms of assembly, heterodimer of HisH and HisF.

It is found in the cytoplasm. The catalysed reaction is 5-[(5-phospho-1-deoxy-D-ribulos-1-ylimino)methylamino]-1-(5-phospho-beta-D-ribosyl)imidazole-4-carboxamide + L-glutamine = D-erythro-1-(imidazol-4-yl)glycerol 3-phosphate + 5-amino-1-(5-phospho-beta-D-ribosyl)imidazole-4-carboxamide + L-glutamate + H(+). It participates in amino-acid biosynthesis; L-histidine biosynthesis; L-histidine from 5-phospho-alpha-D-ribose 1-diphosphate: step 5/9. Functionally, IGPS catalyzes the conversion of PRFAR and glutamine to IGP, AICAR and glutamate. The HisF subunit catalyzes the cyclization activity that produces IGP and AICAR from PRFAR using the ammonia provided by the HisH subunit. The sequence is that of Imidazole glycerol phosphate synthase subunit HisF from Acinetobacter baylyi (strain ATCC 33305 / BD413 / ADP1).